Consider the following 326-residue polypeptide: Phenylalanine--tRNA ligase alpha subunit (326 aa).

Glu-251 contacts Mg(2+).

The protein belongs to the class-II aminoacyl-tRNA synthetase family. Phe-tRNA synthetase alpha subunit type 1 subfamily. As to quaternary structure, tetramer of two alpha and two beta subunits. Mg(2+) is required as a cofactor.

Its subcellular location is the cytoplasm. It catalyses the reaction tRNA(Phe) + L-phenylalanine + ATP = L-phenylalanyl-tRNA(Phe) + AMP + diphosphate + H(+). This is Phenylalanine--tRNA ligase alpha subunit from Idiomarina loihiensis (strain ATCC BAA-735 / DSM 15497 / L2-TR).